The following is a 237-amino-acid chain: Ribose-5-phosphate isomerase A (237 aa).

Residues 33 to 36, 88 to 91, and 101 to 104 each bind substrate; these read TGST, DGAD, and KGRG. Residue E110 is the Proton acceptor of the active site. K128 is a binding site for substrate.

It belongs to the ribose 5-phosphate isomerase family. Homodimer.

The catalysed reaction is aldehydo-D-ribose 5-phosphate = D-ribulose 5-phosphate. The protein operates within carbohydrate degradation; pentose phosphate pathway; D-ribose 5-phosphate from D-ribulose 5-phosphate (non-oxidative stage): step 1/1. Functionally, catalyzes the reversible conversion of ribose-5-phosphate to ribulose 5-phosphate. This is Ribose-5-phosphate isomerase A from Methanoregula boonei (strain DSM 21154 / JCM 14090 / 6A8).